The sequence spans 154 residues: Cyclin-dependent protein kinase inhibitor SMR14 (154 aa).

Residues 1–111 form a disordered region; that stretch reads MSKIKIFHLF…RPPRKPKAIP (111 aa). The segment covering 24–37 has biased composition (low complexity); the sequence is SLLVPSKSDSLDSS. The segment covering 74 to 83 has biased composition (basic and acidic residues); the sequence is KWECKDEESP.

Its function is as follows. Probable cyclin-dependent protein kinase (CDK) inhibitor that functions as a repressor of mitosis in the endoreduplication cell cycle. This chain is Cyclin-dependent protein kinase inhibitor SMR14, found in Arabidopsis thaliana (Mouse-ear cress).